Consider the following 252-residue polypeptide: Triosephosphate isomerase (252 aa).

9-11 lines the substrate pocket; the sequence is NWK. His-95 functions as the Electrophile in the catalytic mechanism. Glu-167 serves as the catalytic Proton acceptor. Substrate is bound by residues Gly-173, Ser-213, and 234 to 235; that span reads GG.

It belongs to the triosephosphate isomerase family. As to quaternary structure, homodimer.

It localises to the cytoplasm. It carries out the reaction D-glyceraldehyde 3-phosphate = dihydroxyacetone phosphate. Its pathway is carbohydrate biosynthesis; gluconeogenesis. It participates in carbohydrate degradation; glycolysis; D-glyceraldehyde 3-phosphate from glycerone phosphate: step 1/1. Functionally, involved in the gluconeogenesis. Catalyzes stereospecifically the conversion of dihydroxyacetone phosphate (DHAP) to D-glyceraldehyde-3-phosphate (G3P). This is Triosephosphate isomerase from Lactiplantibacillus plantarum (strain ATCC BAA-793 / NCIMB 8826 / WCFS1) (Lactobacillus plantarum).